A 277-amino-acid chain; its full sequence is uncharacterized protein (277 aa).

32–39 lines the ATP pocket; sequence GPQGSGKS.

Belongs to the GLYK kinase family.

It is found in the cytoplasm. Its subcellular location is the nucleus. Functionally, has a role in meiosis. This is an uncharacterized protein from Schizosaccharomyces pombe (strain 972 / ATCC 24843) (Fission yeast).